The primary structure comprises 451 residues: UPF0210 protein CA_C0479 (451 aa).

It belongs to the UPF0210 family. In terms of assembly, homodimer.

This chain is UPF0210 protein CA_C0479, found in Clostridium acetobutylicum (strain ATCC 824 / DSM 792 / JCM 1419 / IAM 19013 / LMG 5710 / NBRC 13948 / NRRL B-527 / VKM B-1787 / 2291 / W).